The following is a 408-amino-acid chain: Argininosuccinate synthase (408 aa).

ATP-binding positions include 12-20 (AYSGGLDTS) and A39. L-citrulline contacts are provided by Y92 and S97. G122 lines the ATP pocket. L-aspartate contacts are provided by T124, N128, and D129. Residue N128 coordinates L-citrulline. L-citrulline is bound by residues R132, S183, S192, E268, and Y280.

Belongs to the argininosuccinate synthase family. Type 1 subfamily. Homotetramer.

The protein localises to the cytoplasm. The catalysed reaction is L-citrulline + L-aspartate + ATP = 2-(N(omega)-L-arginino)succinate + AMP + diphosphate + H(+). It functions in the pathway amino-acid biosynthesis; L-arginine biosynthesis; L-arginine from L-ornithine and carbamoyl phosphate: step 2/3. The chain is Argininosuccinate synthase from Caulobacter vibrioides (strain ATCC 19089 / CIP 103742 / CB 15) (Caulobacter crescentus).